Here is a 191-residue protein sequence, read N- to C-terminus: Holliday junction branch migration complex subunit RuvA (191 aa).

The tract at residues M1–G64 is domain I. Positions S65–L138 are domain II. The flexible linker stretch occupies residues L138–V141. The interval P142–A191 is domain III.

This sequence belongs to the RuvA family. Homotetramer. Forms an RuvA(8)-RuvB(12)-Holliday junction (HJ) complex. HJ DNA is sandwiched between 2 RuvA tetramers; dsDNA enters through RuvA and exits via RuvB. An RuvB hexamer assembles on each DNA strand where it exits the tetramer. Each RuvB hexamer is contacted by two RuvA subunits (via domain III) on 2 adjacent RuvB subunits; this complex drives branch migration. In the full resolvosome a probable DNA-RuvA(4)-RuvB(12)-RuvC(2) complex forms which resolves the HJ.

It localises to the cytoplasm. In terms of biological role, the RuvA-RuvB-RuvC complex processes Holliday junction (HJ) DNA during genetic recombination and DNA repair, while the RuvA-RuvB complex plays an important role in the rescue of blocked DNA replication forks via replication fork reversal (RFR). RuvA specifically binds to HJ cruciform DNA, conferring on it an open structure. The RuvB hexamer acts as an ATP-dependent pump, pulling dsDNA into and through the RuvAB complex. HJ branch migration allows RuvC to scan DNA until it finds its consensus sequence, where it cleaves and resolves the cruciform DNA. This Thiobacillus denitrificans (strain ATCC 25259 / T1) protein is Holliday junction branch migration complex subunit RuvA.